The primary structure comprises 303 residues: UDP-3-O-acyl-N-acetylglucosamine deacetylase (303 aa).

The Zn(2+) site is built by H78, H237, and D241. The active-site Proton donor is the H264.

The protein belongs to the LpxC family. Zn(2+) is required as a cofactor.

It carries out the reaction a UDP-3-O-[(3R)-3-hydroxyacyl]-N-acetyl-alpha-D-glucosamine + H2O = a UDP-3-O-[(3R)-3-hydroxyacyl]-alpha-D-glucosamine + acetate. Its pathway is glycolipid biosynthesis; lipid IV(A) biosynthesis; lipid IV(A) from (3R)-3-hydroxytetradecanoyl-[acyl-carrier-protein] and UDP-N-acetyl-alpha-D-glucosamine: step 2/6. Its function is as follows. Catalyzes the hydrolysis of UDP-3-O-myristoyl-N-acetylglucosamine to form UDP-3-O-myristoylglucosamine and acetate, the committed step in lipid A biosynthesis. The chain is UDP-3-O-acyl-N-acetylglucosamine deacetylase from Stenotrophomonas maltophilia (strain R551-3).